We begin with the raw amino-acid sequence, 184 residues long: Jacalin-related lectin 2 (184 aa).

The Jacalin-type lectin domain occupies 4–163 (KIKIGPVGTD…LQNIGVYLQP (160 aa)).

The protein belongs to the jacalin lectin family.

The protein is Jacalin-related lectin 2 (JAL2) of Arabidopsis thaliana (Mouse-ear cress).